A 386-amino-acid chain; its full sequence is MEEQGIQCAPPPPAASQTGVPLTNLSHNCSADGYIYQDSIALPWKVLLVALLALITLATTLSNAFVIATVYRTRKLHTPANYLIASLAVTDLLVSILVMPISTMYTVTGRWTLGQVVCDFWLSSDITCCTASIMHLCVIALDRYWAITDAVEYSAKRTPKRAAIMIVLVWVFSISISLPPFFWRQAKAEEEMLDCFVNTDHVLYTVYSTVGAFYLPTLLLIALYGRIYVEARSRILKQTPNKTGKRLTRAQLITDSPGSTSSVTSINSRAPDVPSESGSPVYVNQVKVRVSDALLEKKKLMAARERKATKTLGIILGAFIVCWLPFFIISLVMPICKDACWFHMAIFDFFNWLGYLNSLINPIIYTMSNEDFKQAFHKLIRFKCAG.

At 1-42 (MEEQGIQCAPPPPAASQTGVPLTNLSHNCSADGYIYQDSIAL) the chain is on the extracellular side. N-linked (GlcNAc...) asparagine glycosylation is found at Asn-24 and Asn-28. The helical transmembrane segment at 43-68 (PWKVLLVALLALITLATTLSNAFVIA) threads the bilayer. At 69–82 (TVYRTRKLHTPANY) the chain is on the cytoplasmic side. The helical transmembrane segment at 83 to 107 (LIASLAVTDLLVSILVMPISTMYTV) threads the bilayer. Topologically, residues 108–115 (TGRWTLGQ) are extracellular. The helical transmembrane segment at 116-141 (VVCDFWLSSDITCCTASIMHLCVIAL) threads the bilayer. Cysteines 118 and 195 form a disulfide. The ergotamine site is built by Asp-125 and Thr-130. Positions 142 to 144 (DRY) match the DRY motif; important for ligand-induced conformation changes and signaling motif. Over 142–161 (DRYWAITDAVEYSAKRTPKR) the chain is Cytoplasmic. Residues 162 to 180 (AAIMIVLVWVFSISISLPP) form a helical membrane-spanning segment. Over 181–201 (FFWRQAKAEEEMLDCFVNTDH) the chain is Extracellular. An ergotamine-binding site is contributed by Val-197. The helical transmembrane segment at 202–225 (VLYTVYSTVGAFYLPTLLLIALYG) threads the bilayer. The Cytoplasmic segment spans residues 226–311 (RIYVEARSRI…AARERKATKT (86 aa)). The span at 255-268 (DSPGSTSSVTSINS) shows a compositional bias: polar residues. Positions 255-278 (DSPGSTSSVTSINSRAPDVPSESG) are disordered. The chain crosses the membrane as a helical span at residues 312 to 333 (LGIILGAFIVCWLPFFIISLVM). Residues 334-343 (PICKDACWFH) lie on the Extracellular side of the membrane. The chain crosses the membrane as a helical span at residues 344-366 (MAIFDFFNWLGYLNSLINPIIYT). The short motif at 361–365 (NPIIY) is the NPxxY motif; important for ligand-induced conformation changes and signaling element. Residues 367-386 (MSNEDFKQAFHKLIRFKCAG) are Cytoplasmic-facing. Cys-384 is lipidated: S-palmitoyl cysteine.

The protein belongs to the G-protein coupled receptor 1 family. In terms of assembly, homodimer. Heterodimer with HTR1D. Post-translationally, phosphorylated. Desensitization of the receptor may be mediated by its phosphorylation. Palmitoylated. Predominantly expressed in striatum and Purkinje cells.

It localises to the cell membrane. Functionally, G-protein coupled receptor for 5-hydroxytryptamine (serotonin). Also functions as a receptor for ergot alkaloid derivatives, various anxiolytic and antidepressant drugs and other psychoactive substances, such as lysergic acid diethylamide (LSD). Ligand binding causes a conformation change that triggers signaling via guanine nucleotide-binding proteins (G proteins) and modulates the activity of downstream effectors, such as adenylate cyclase. HTR1B is coupled to G(i)/G(o) G alpha proteins and mediates inhibitory neurotransmission by inhibiting adenylate cyclase activity. Arrestin family members inhibit signaling via G proteins and mediate activation of alternative signaling pathways. Regulates the release of 5-hydroxytryptamine, dopamine and acetylcholine in the brain, and thereby affects neural activity, nociceptive processing, pain perception, mood and behavior. Besides, plays a role in vasoconstriction of cerebral arteries. The chain is 5-hydroxytryptamine receptor 1B (Htr1b) from Mus musculus (Mouse).